The chain runs to 1241 residues: MRSQAKTETVSSKSSRNTHVIFRFADWIDIVLMVLGSVGAIGDGMSTNVSLVFVSRIMNTLGYSQHNPSSTNFKEEIQKCSLYFVYLGLAILGVAFMEGYCWSKTSERQVMKIRRTYLEAVLRQEVSFFDSDISTSEIIHTISTDTSLIQQLLSEKVPIFLMHISVFITGLVFSAYFSWRLTVVAIPTLVLLLIPGLIYGKYLVHLSKKSFKEYTKANSIVEQALSSIKTILSFTAETQIIKKYSEVLERHKKLGLKQGLAKGLAVGSSGISFTIWAFLAWYGSRLVMHKQETGGRIYAAGISFVLGGISLGTALTEIRYFSEASVAAARICSRIDRISEIDGEDTKKGFIPGEKMKGRVEFERVTLVYLSRPETIILKDFTLTVDVGQSVALMGASGSGKSTVIALLQRFYDPCEGFVRIDGFDIKTLQLKWMRQHIGVVSQDHALFGTSIMENLMFGKNKASMDEVISAAKAANAHGFITQLPNGYDTHIGNRGALLSGGQKQRIAIARAIIRNPVILLLDEATSALDGESETLIQNALDQVAAGRTTLVVAHKLSTVRGANIIAMLENGSVRELGSHEDLMTKNNHYAKLVKLQRQFGHEHQQDLQDRVNSPEIQQRWSTMNSVIRLSNRSSPDLIVSPITLESNHTTKINENIPSTSFTRLLPFVSPEWKSSLVGCISATTFGAIQPVYALSIGGMISAFFAKSSQEMQDKIHIYSLIFISLTFLSITLNLLQHYSFAKMGERLMQRLRLKMLEKIFTFEPAWFDVEENFTSEICSRLNNEVSIVKSLVADRISLLVQTISGVTIAMIIGLLISWKLALVMIAVQPLSILCFYTKKVLLSKISNNYAYAQNRSSQIASEAIYNHKIVTSLGSTKKIIEIFDNAQYEAKRKGRKAAWLAGFGMGSAQCLTFLTWALDFWYGGVLVQKGEISAGDVFKTFFVLVSTGKVIAEAGSMTSDLAKGTAAISSVFNILDRPSSHENTNHGEKMGTIQGRIELKNIDFSYPNRPSILVLRDFSLDIKPGTSIGLVGTSGCGKSTVIALIQRFYDVEIGCVKIDSENLRDINIKWYRKHTALVSQEPVVYSGSIQDNIILGRPEATEDEVVEAAKAANAHDFISAMEKGYKTECGERGVQLSGGQKQRIAIARAFLRSPIILLLDEVTSSLDSNSEQEVQDALARIMASRNMTTVVVAHRLNTLKNLDCIALIVDGTVIETGSYDHLKNIGGQFSRLAHAHDLKS.

A helical transmembrane segment spans residues 24–44 (FADWIDIVLMVLGSVGAIGDG). The ABC transmembrane type-1 1 domain maps to 33-323 (MVLGSVGAIG…ALTEIRYFSE (291 aa)). The N-linked (GlcNAc...) asparagine glycan is linked to Asn48. The next 5 helical transmembrane spans lie at 82 to 102 (LYFV…GYCW), 157 to 177 (VPIF…SAYF), 183 to 203 (VVAI…GKYL), 263 to 283 (GLAV…AWYG), and 297 to 317 (IYAA…ALTE). The ABC transporter 1 domain occupies 360–596 (VEFERVTLVY…NNHYAKLVKL (237 aa)). Position 395–402 (395–402 (GASGSGKS)) interacts with ATP. N-linked (GlcNAc...) asparagine glycosylation is found at Asn571, Asn632, and Asn648. The region spanning 676-964 (SLVGCISATT…AGSMTSDLAK (289 aa)) is the ABC transmembrane type-1 2 domain. A run of 2 helical transmembrane segments spans residues 686 to 706 (FGAI…AFFA) and 716 to 736 (IHIY…LNLL). N-linked (GlcNAc...) asparagine glycosylation occurs at Asn773. A run of 2 helical transmembrane segments spans residues 797–815 (ISLL…IIGL) and 821–838 (LALV…CFYT). Asn855 carries N-linked (GlcNAc...) asparagine glycosylation. 2 helical membrane-spanning segments follow: residues 899–919 (AWLA…TWAL) and 933–953 (ISAG…KVIA). Residues 998–1236 (IELKNIDFSY…GGQFSRLAHA (239 aa)) enclose the ABC transporter 2 domain. 1033-1040 (GTSGCGKS) contacts ATP. N-linked (GlcNAc...) asparagine glycosylation occurs at Asn1187.

Belongs to the ABC transporter superfamily. ABCB family. Multidrug resistance exporter (TC 3.A.1.201) subfamily.

The protein resides in the membrane. This Arabidopsis thaliana (Mouse-ear cress) protein is Putative ABC transporter B family member 8 (ABCB8).